We begin with the raw amino-acid sequence, 292 residues long: Small ribosomal subunit protein uS2 (292 aa).

Residues 265–292 are disordered; the sequence is TETALDWSDEPVAGDWAAEPAADAQGGW. Over residues 277–292 the composition is skewed to low complexity; it reads AGDWAAEPAADAQGGW.

Belongs to the universal ribosomal protein uS2 family. In terms of assembly, component of the small ribosomal subunit. Mature ribosomes consist of a small (40S) and a large (60S) subunit. The 40S subunit contains about 33 different proteins and 1 molecule of RNA (18S). The 60S subunit contains about 49 different proteins and 3 molecules of RNA (25S, 5.8S and 5S). Interacts with RPS21.

It localises to the cytoplasm. Required for the assembly and/or stability of the 40S ribosomal subunit. Required for the processing of the 20S rRNA-precursor to mature 18S rRNA in a late step of the maturation of 40S ribosomal subunits. In Cryptococcus neoformans var. neoformans serotype D (strain B-3501A) (Filobasidiella neoformans), this protein is Small ribosomal subunit protein uS2.